Consider the following 445-residue polypeptide: tRNA modification GTPase MnmE (445 aa).

(6S)-5-formyl-5,6,7,8-tetrahydrofolate-binding residues include Arg20, Glu79, and Lys119. The region spanning 215 to 371 is the TrmE-type G domain; that stretch reads GLKLAIIGPP…ILKNIENIAE (157 aa). Position 225 (Asn225) interacts with K(+). Residues 225–230, 244–250, and 269–272 each bind GTP; these read NTGKSS, SNIAGTT, and DTAG. Ser229 contributes to the Mg(2+) binding site. K(+) contacts are provided by Ser244, Ile246, and Thr249. Position 250 (Thr250) interacts with Mg(2+). Lys445 is a (6S)-5-formyl-5,6,7,8-tetrahydrofolate binding site.

Belongs to the TRAFAC class TrmE-Era-EngA-EngB-Septin-like GTPase superfamily. TrmE GTPase family. As to quaternary structure, homodimer. Heterotetramer of two MnmE and two MnmG subunits. Requires K(+) as cofactor.

Its subcellular location is the cytoplasm. Functionally, exhibits a very high intrinsic GTPase hydrolysis rate. Involved in the addition of a carboxymethylaminomethyl (cmnm) group at the wobble position (U34) of certain tRNAs, forming tRNA-cmnm(5)s(2)U34. This is tRNA modification GTPase MnmE from Rickettsia prowazekii (strain Madrid E).